Here is a 293-residue protein sequence, read N- to C-terminus: MKLSSILYVSVLAHLVMSKNVIDLDSFKESLHEEDHDKRDGKNVIDLEQFEASTQQEQNEKREAKNVYNLQSLKEDHIGENEKREAKNVYNLQSLKEGLDDENDKREGNVNKPEVSEEGSNKGDKRSMQNVIDIQEQDTHQNLLQSILPQLQSITIFTGYIRDDPELAMKTADSKQSMIIIAPSDDSISSKLNNLKPWEFPNELTGNSDDDRIVSENLKNFLNGHVIVDFKDKFVTSNDEIIANLVNGKQVKIKQEGSDKFKISTGDKWIKVETVKQVDNGYIFVINDVLVKP.

The N-terminal stretch at 1 to 18 (MKLSSILYVSVLAHLVMS) is a signal peptide. Basic and acidic residues predominate over residues 76–87 (DHIGENEKREAK). Residues 76–126 (DHIGENEKREAKNVYNLQSLKEGLDDENDKREGNVNKPEVSEEGSNKGDKR) are disordered. The FAS1 domain maps to 141–290 (QNLLQSILPQ…GYIFVINDVL (150 aa)).

The protein localises to the vacuole. The polypeptide is FAS1 domain-containing protein DEHA2G15708g (Debaryomyces hansenii (strain ATCC 36239 / CBS 767 / BCRC 21394 / JCM 1990 / NBRC 0083 / IGC 2968) (Yeast)).